The following is a 156-amino-acid chain: Small ribosomal subunit protein uS7 (156 aa).

This sequence belongs to the universal ribosomal protein uS7 family. Part of the 30S ribosomal subunit. Contacts proteins S9 and S11.

Its function is as follows. One of the primary rRNA binding proteins, it binds directly to 16S rRNA where it nucleates assembly of the head domain of the 30S subunit. Is located at the subunit interface close to the decoding center, probably blocks exit of the E-site tRNA. This Chelativorans sp. (strain BNC1) protein is Small ribosomal subunit protein uS7.